The sequence spans 834 residues: Periplasmic nitrate reductase (834 aa).

The segment at residues 1–29 (MNLTRREFAKANAAAIAAAAAGLPILVRA) is a signal peptide (tat-type signal). Residues 41-97 (LVWNKAPCRFCGTGCSVMVATRDGQVVATHGDIKAEVNRGINCVKGYFLSKIMYGSD) enclose the 4Fe-4S Mo/W bis-MGD-type domain. [4Fe-4S] cluster is bound by residues cysteine 48, cysteine 51, cysteine 55, and cysteine 83. Residues lysine 85, glutamine 152, asparagine 177, cysteine 181, 214–221 (WGSNMAEM), 245–249 (STFEH), 264–266 (QTD), methionine 375, glutamine 379, asparagine 485, 511–512 (SD), lysine 534, aspartate 561, and 721–730 (TGRVLEHWHT) contribute to the Mo-bis(molybdopterin guanine dinucleotide) site. A substrate-binding site is contributed by phenylalanine 797. Residues asparagine 805 and lysine 822 each contribute to the Mo-bis(molybdopterin guanine dinucleotide) site.

Belongs to the prokaryotic molybdopterin-containing oxidoreductase family. NasA/NapA/NarB subfamily. As to quaternary structure, component of the periplasmic nitrate reductase NapAB complex composed of NapA and NapB. It depends on [4Fe-4S] cluster as a cofactor. The cofactor is Mo-bis(molybdopterin guanine dinucleotide). Predicted to be exported by the Tat system. The position of the signal peptide cleavage has not been experimentally proven.

It localises to the periplasm. It catalyses the reaction 2 Fe(II)-[cytochrome] + nitrate + 2 H(+) = 2 Fe(III)-[cytochrome] + nitrite + H2O. Functionally, catalytic subunit of the periplasmic nitrate reductase complex NapAB. Receives electrons from NapB and catalyzes the reduction of nitrate to nitrite. This Pseudomonas aeruginosa (strain UCBPP-PA14) protein is Periplasmic nitrate reductase.